The following is a 608-amino-acid chain: MGQAHITKHIFVTGGVASSLGKGLTASSLGRLLKARGLRVTMQKLDPYLNVDPGTMNPFQHGEVFVTDDGAETDLDIGHYERFLDVSLDGSANVTTGQVYSAVIARERRGGYLGQTVQVVPHITDEIKDRIRRLADDSVDVVITEVGGTVGDIESLPYLEAIRQVRHEVGRDNALTVHVSLVPYLAPSGELKTKPTQHSVAALRSIGLQPDAVVCRSDRPLPDSLKKKIAMMCDVDDEAVVGAPDASSIYDIPRVLHREGLDAYVVRRLGLSFRDVDWTEWDTLLRRVHHPANTATIAIVGKYVDLPDAYLSVTEALRAGAFATDTRVDLRWVTSDECSSPDATATLLDGIDGVIVPGGFGVRGIEGKLTALRHARENGIPTLGICLGLQCMVIEAARSLAGLEAANSTEFVPETPHPVISTMADQHEVVAGTRDMGGTMRLGLYSCVLAPGTLAQREYGAAEVAERHRHRYEVNNDYRHRLAAAGLVFSGTSPDGRLVEVVELPADVHPYYVGTQAHPEFRSRPTRAHPLFRGLVAAAVAHADRRRGMLPVDLPSEDAPTPENGVPENGAAQTRGVTAGRSGGSIRRGASASRPSVSSNGTAALVSP.

An amidoligase domain region spans residues 1-271 (MGQAHITKHI…DAYVVRRLGL (271 aa)). S18 lines the CTP pocket. S18 provides a ligand contact to UTP. Residues 19–24 (SLGKGL) and D76 contribute to the ATP site. D76 and E145 together coordinate Mg(2+). Residues 152 to 154 (DIE), 192 to 197 (KTKPTQ), and K228 each bind CTP. UTP contacts are provided by residues 192 to 197 (KTKPTQ) and K228. One can recognise a Glutamine amidotransferase type-1 domain in the interval 296 to 545 (TIAIVGKYVD…VAAAVAHADR (250 aa)). Position 359 (G359) interacts with L-glutamine. C386 serves as the catalytic Nucleophile; for glutamine hydrolysis. L-glutamine-binding positions include 387-390 (LGLQ), E410, and R471. Catalysis depends on residues H518 and E520. The disordered stretch occupies residues 550-608 (LPVDLPSEDAPTPENGVPENGAAQTRGVTAGRSGGSIRRGASASRPSVSSNGTAALVSP). Residues 584-594 (GSIRRGASASR) show a composition bias toward low complexity.

Belongs to the CTP synthase family. In terms of assembly, homotetramer.

The catalysed reaction is UTP + L-glutamine + ATP + H2O = CTP + L-glutamate + ADP + phosphate + 2 H(+). It catalyses the reaction L-glutamine + H2O = L-glutamate + NH4(+). The enzyme catalyses UTP + NH4(+) + ATP = CTP + ADP + phosphate + 2 H(+). It participates in pyrimidine metabolism; CTP biosynthesis via de novo pathway; CTP from UDP: step 2/2. Its activity is regulated as follows. Allosterically activated by GTP, when glutamine is the substrate; GTP has no effect on the reaction when ammonia is the substrate. The allosteric effector GTP functions by stabilizing the protein conformation that binds the tetrahedral intermediate(s) formed during glutamine hydrolysis. Inhibited by the product CTP, via allosteric rather than competitive inhibition. Catalyzes the ATP-dependent amination of UTP to CTP with either L-glutamine or ammonia as the source of nitrogen. Regulates intracellular CTP levels through interactions with the four ribonucleotide triphosphates. The sequence is that of CTP synthase from Frankia casuarinae (strain DSM 45818 / CECT 9043 / HFP020203 / CcI3).